The sequence spans 852 residues: Replication factor C small subunit (852 aa).

A DOD-type homing endonuclease domain is found at 183–306 (WLGYFMGSGY…IAYALASFGI (124 aa)).

This sequence belongs to the activator 1 small subunits family. RfcS subfamily. In terms of assembly, heteromultimer composed of three to four small subunits (RfcS) and one to two large subunits (RfcL). In terms of processing, this protein undergoes a protein self splicing that involves a post-translational excision of the intervening region (intein) followed by peptide ligation.

Its function is as follows. Part of the RFC clamp loader complex which loads the PCNA sliding clamp onto DNA. The complex possesses DNA-dependent ATPase activity which is further stimulated by PCNA. This Pyrococcus furiosus (strain ATCC 43587 / DSM 3638 / JCM 8422 / Vc1) protein is Replication factor C small subunit (rfcS).